Here is a 229-residue protein sequence, read N- to C-terminus: Large ribosomal subunit protein uL1 (229 aa).

The protein belongs to the universal ribosomal protein uL1 family. Part of the 50S ribosomal subunit.

Binds directly to 23S rRNA. The L1 stalk is quite mobile in the ribosome, and is involved in E site tRNA release. In terms of biological role, protein L1 is also a translational repressor protein, it controls the translation of the L11 operon by binding to its mRNA. The sequence is that of Large ribosomal subunit protein uL1 from Clostridium perfringens (strain ATCC 13124 / DSM 756 / JCM 1290 / NCIMB 6125 / NCTC 8237 / Type A).